A 548-amino-acid polypeptide reads, in one-letter code: Synaptic vesicle 2-related protein (548 aa).

Residues 1–87 (MEDDLFQLRH…GFGKFQWKLS (87 aa)) lie on the Cytoplasmic side of the membrane. Residues 88 to 108 (MLTGLAWMADAMEMMILSILA) traverse the membrane as a helical segment. Residues 109–119 (PQLHCEWRLPS) are Vesicular-facing. A helical membrane pass occupies residues 120–140 (WQVALLTSVVFIGMMASSSLW). Residues 141-156 (GNVSDQYGRRTGLKIS) are Cytoplasmic-facing. A helical transmembrane segment spans residues 157 to 177 (VIWTLYYGILSAFAPVYSWIL). At 178-180 (VLR) the chain is on the vesicular side. A helical membrane pass occupies residues 181 to 201 (GLVGFGIGGVPQSVTLYAEFL). Over 202 to 209 (PMKSRAKC) the chain is Cytoplasmic. A helical membrane pass occupies residues 210–230 (ILLIEIFWALGTVFEVLLAIF). Topologically, residues 231-238 (VMPTLGWR) are vesicular. The chain crosses the membrane as a helical span at residues 239-259 (WLLILSALPLMLFAILCFWLP). Residues 260 to 316 (ESARYEVLSGNQEKALATLKRIATENGAPMPLGKLIVSRQEDRGKIRDLFSPQFRCT) lie on the Cytoplasmic side of the membrane. Residues 317–337 (TLLLWFIWFSNAFSYYGLVLL) form a helical membrane-spanning segment. Over 338 to 373 (TTELFQAGDVCSISNQRKAVKPKCSLACEYLTVEDY) the chain is Vesicular. A helical transmembrane segment spans residues 374 to 394 (TDLLWTTLSEFPGLLVTLWII). At 395 to 401 (DRVGRKK) the chain is on the cytoplasmic side. The chain crosses the membrane as a helical span at residues 402-422 (TMAICFIIFSFSALLLFLCVG). At 423 to 424 (RN) the chain is on the vesicular side. A helical transmembrane segment spans residues 425 to 445 (VLTVFLFIARAFISGGFQAAY). Over 446–457 (VYTPEVYPTATR) the chain is Cytoplasmic. A helical membrane pass occupies residues 458-478 (ALGLGTCSGMARVGALITPFI). Residues 479–486 (AQVMLESS) are Vesicular-facing. Residues 487–507 (IYLTVLVYSGCCVLAAVASCF) traverse the membrane as a helical segment. Residues 508–548 (LPIETKGRGLQESSHREWGQEMVGRGTHNVGATPSHSGSQE) lie on the Cytoplasmic side of the membrane. The disordered stretch occupies residues 519 to 548 (ESSHREWGQEMVGRGTHNVGATPSHSGSQE). Polar residues predominate over residues 537 to 548 (VGATPSHSGSQE).

This sequence belongs to the major facilitator superfamily. Detected in embryonic trigeminal ganglion and spinal cord.

Its subcellular location is the cytoplasmic vesicle. The protein localises to the secretory vesicle. The protein resides in the synaptic vesicle membrane. The protein is Synaptic vesicle 2-related protein (svop) of Xenopus laevis (African clawed frog).